The chain runs to 228 residues: 2-C-methyl-D-erythritol 4-phosphate cytidylyltransferase (228 aa).

This sequence belongs to the IspD/TarI cytidylyltransferase family. IspD subfamily.

The catalysed reaction is 2-C-methyl-D-erythritol 4-phosphate + CTP + H(+) = 4-CDP-2-C-methyl-D-erythritol + diphosphate. The protein operates within isoprenoid biosynthesis; isopentenyl diphosphate biosynthesis via DXP pathway; isopentenyl diphosphate from 1-deoxy-D-xylulose 5-phosphate: step 2/6. In terms of biological role, catalyzes the formation of 4-diphosphocytidyl-2-C-methyl-D-erythritol from CTP and 2-C-methyl-D-erythritol 4-phosphate (MEP). In Mannheimia succiniciproducens (strain KCTC 0769BP / MBEL55E), this protein is 2-C-methyl-D-erythritol 4-phosphate cytidylyltransferase.